The chain runs to 440 residues: Xaa-Pro dipeptidase (440 aa).

Positions 244, 255, 335, 380, and 419 each coordinate Mn(2+).

The protein belongs to the peptidase M24B family. Bacterial-type prolidase subfamily. Mn(2+) serves as cofactor.

The catalysed reaction is Xaa-L-Pro dipeptide + H2O = an L-alpha-amino acid + L-proline. Functionally, splits dipeptides with a prolyl residue in the C-terminal position. This chain is Xaa-Pro dipeptidase, found in Shewanella putrefaciens (strain CN-32 / ATCC BAA-453).